Here is a 212-residue protein sequence, read N- to C-terminus: Regulatory protein RecX (212 aa).

The protein belongs to the RecX family.

The protein localises to the cytoplasm. In terms of biological role, modulates RecA activity. This chain is Regulatory protein RecX, found in Clostridium perfringens (strain SM101 / Type A).